Reading from the N-terminus, the 264-residue chain is ORC1-type DNA replication protein 2 (264 aa).

Residues 73 to 77 (TGKSL), Y220, and R232 contribute to the ATP site.

This sequence belongs to the CDC6/cdc18 family.

Involved in regulation of DNA replication. This is ORC1-type DNA replication protein 2 (orc2) from Halobacterium salinarum (strain ATCC 700922 / JCM 11081 / NRC-1) (Halobacterium halobium).